The following is a 194-amino-acid chain: Protein GrpE (194 aa).

The segment at 1–39 (MTNHEQDQQDNSELLDDDQVTLESQQAADSGAEAPASDD) is disordered. Positions 8–20 (QQDNSELLDDDQV) are enriched in acidic residues.

It belongs to the GrpE family. As to quaternary structure, homodimer.

It localises to the cytoplasm. Participates actively in the response to hyperosmotic and heat shock by preventing the aggregation of stress-denatured proteins, in association with DnaK and GrpE. It is the nucleotide exchange factor for DnaK and may function as a thermosensor. Unfolded proteins bind initially to DnaJ; upon interaction with the DnaJ-bound protein, DnaK hydrolyzes its bound ATP, resulting in the formation of a stable complex. GrpE releases ADP from DnaK; ATP binding to DnaK triggers the release of the substrate protein, thus completing the reaction cycle. Several rounds of ATP-dependent interactions between DnaJ, DnaK and GrpE are required for fully efficient folding. The chain is Protein GrpE from Saccharophagus degradans (strain 2-40 / ATCC 43961 / DSM 17024).